Reading from the N-terminus, the 227-residue chain is Orotidine 5'-phosphate decarboxylase (227 aa).

Residues Asp12, Lys34, 61–70, Thr117, Arg178, Gln187, Gly207, and Arg208 contribute to the substrate site; that span reads DLKLHDIPNT. The Proton donor role is filled by Lys63.

This sequence belongs to the OMP decarboxylase family. Type 1 subfamily. As to quaternary structure, homodimer.

The enzyme catalyses orotidine 5'-phosphate + H(+) = UMP + CO2. It functions in the pathway pyrimidine metabolism; UMP biosynthesis via de novo pathway; UMP from orotate: step 2/2. Functionally, catalyzes the decarboxylation of orotidine 5'-monophosphate (OMP) to uridine 5'-monophosphate (UMP). The chain is Orotidine 5'-phosphate decarboxylase from Anaeromyxobacter dehalogenans (strain 2CP-1 / ATCC BAA-258).